A 179-amino-acid polypeptide reads, in one-letter code: Ribosome maturation factor RimM (179 aa).

In terms of domain architecture, PRC barrel spans 100-176 (KEEFHLLELI…FLIINPPNGL (77 aa)).

The protein belongs to the RimM family. Binds ribosomal protein uS19.

Its subcellular location is the cytoplasm. Its function is as follows. An accessory protein needed during the final step in the assembly of 30S ribosomal subunit, possibly for assembly of the head region. Essential for efficient processing of 16S rRNA. May be needed both before and after RbfA during the maturation of 16S rRNA. It has affinity for free ribosomal 30S subunits but not for 70S ribosomes. The sequence is that of Ribosome maturation factor RimM from Prochlorococcus marinus (strain AS9601).